The primary structure comprises 233 residues: Large ribosomal subunit protein uL1 (233 aa).

The protein belongs to the universal ribosomal protein uL1 family. As to quaternary structure, part of the 50S ribosomal subunit.

Functionally, binds directly to 23S rRNA. The L1 stalk is quite mobile in the ribosome, and is involved in E site tRNA release. Its function is as follows. Protein L1 is also a translational repressor protein, it controls the translation of the L11 operon by binding to its mRNA. The chain is Large ribosomal subunit protein uL1 from Campylobacter curvus (strain 525.92).